Here is a 626-residue protein sequence, read N- to C-terminus: Probable potassium transport system protein Kup (626 aa).

Helical transmembrane passes span 8–28 (VALP…IGTS), 44–64 (ISEA…TLSI), 102–122 (IYLI…GIIT), 139–159 (PAFD…LFMV), 171–191 (FGPI…YSII), 196–216 (ILWF…PFVA), 217–237 (FVAM…YADM), 249–269 (WFIV…ALLL), 281–301 (LLVP…AAVI), 339–359 (IYVP…IILF), 377–397 (MLCV…WPWW), 399–419 (VTLF…STSL), and 421–441 (ILSG…ILMT).

The protein belongs to the HAK/KUP transporter (TC 2.A.72) family.

It localises to the cell inner membrane. The catalysed reaction is K(+)(in) + H(+)(in) = K(+)(out) + H(+)(out). Its function is as follows. Transport of potassium into the cell. Likely operates as a K(+):H(+) symporter. This is Probable potassium transport system protein Kup from Acinetobacter baylyi (strain ATCC 33305 / BD413 / ADP1).